Reading from the N-terminus, the 418-residue chain is Putative competence-damage inducible protein (418 aa).

The protein belongs to the CinA family.

This chain is Putative competence-damage inducible protein, found in Clostridioides difficile (strain 630) (Peptoclostridium difficile).